The primary structure comprises 538 residues: Phosphoenolpyruvate carboxykinase (ATP) (538 aa).

R64 is a substrate binding site. Residues N149 and F151 each coordinate Ca(2+). Substrate-binding residues include Y206 and K212. Residues K212, H231, and 247-255 (GLSGTGKTT) contribute to the ATP site. K212 and H231 together coordinate Mn(2+). D268 provides a ligand contact to Mn(2+). ATP-binding positions include E296, R332, 447–448 (RI), and T453. R332 provides a ligand contact to substrate.

It belongs to the phosphoenolpyruvate carboxykinase (ATP) family. Monomer. Mn(2+) is required as a cofactor.

It localises to the cytoplasm. It catalyses the reaction oxaloacetate + ATP = phosphoenolpyruvate + ADP + CO2. It participates in carbohydrate biosynthesis; gluconeogenesis. Allosterically activated by calcium. Involved in the gluconeogenesis. Catalyzes the conversion of oxaloacetate (OAA) to phosphoenolpyruvate (PEP) through direct phosphoryl transfer between the nucleoside triphosphate and OAA. The sequence is that of Phosphoenolpyruvate carboxykinase (ATP) from Salmonella typhimurium (strain LT2 / SGSC1412 / ATCC 700720).